The chain runs to 885 residues: Alanine--tRNA ligase (885 aa).

The Zn(2+) site is built by His-571, His-575, Cys-674, and His-678.

It belongs to the class-II aminoacyl-tRNA synthetase family. The cofactor is Zn(2+).

The protein localises to the cytoplasm. The catalysed reaction is tRNA(Ala) + L-alanine + ATP = L-alanyl-tRNA(Ala) + AMP + diphosphate. Catalyzes the attachment of alanine to tRNA(Ala) in a two-step reaction: alanine is first activated by ATP to form Ala-AMP and then transferred to the acceptor end of tRNA(Ala). Also edits incorrectly charged Ser-tRNA(Ala) and Gly-tRNA(Ala) via its editing domain. The sequence is that of Alanine--tRNA ligase from Clavibacter michiganensis subsp. michiganensis (strain NCPPB 382).